The sequence spans 93 residues: Alpha-defensin 16 (93 aa).

Residues M1 to A19 form the signal peptide. A propeptide spanning residues D20–S58 is cleaved from the precursor. Positions I22–L54 are disordered. Disulfide bonds link C64–C92, C66–C81, and C71–C91.

This sequence belongs to the alpha-defensin family. In terms of tissue distribution, paneth cells of the small bowel.

The protein resides in the secreted. Functionally, probably contributes to the antimicrobial barrier function of the small bowel mucosa. This is Alpha-defensin 16 (Defa16) from Mus musculus (Mouse).